The following is a 217-amino-acid chain: Large ribosomal subunit protein uL29m (217 aa).

It belongs to the universal ribosomal protein uL29 family. In terms of assembly, component of the mitochondrial large ribosomal subunit. Mature mitochondrial ribosomes consist of a small (37S) and a large (54S) subunit. The 37S subunit contains at least 33 different proteins and 1 molecule of RNA (15S). The 54S subunit contains at least 45 different proteins and 1 molecule of RNA (21S).

Its subcellular location is the mitochondrion. This chain is Large ribosomal subunit protein uL29m (mrpl4), found in Aspergillus clavatus (strain ATCC 1007 / CBS 513.65 / DSM 816 / NCTC 3887 / NRRL 1 / QM 1276 / 107).